The chain runs to 335 residues: Endo-beta-N-acetylglucosaminidase F2 (335 aa).

A signal peptide spans 1–45 (MKTANFSFALCLSVVIMLFIKCTRSEQDLSVTKDAIAQKSGVTVS). The GH18 domain occupies 61-321 (QISAGYYRTW…SSNDNTLRAP (261 aa)). 3 O-linked (Man...) serine glycosylation sites follow: serine 73, serine 89, and serine 143. Glutamate 171 acts as the Proton donor in catalysis.

It belongs to the glycosyl hydrolase 18 family. As to quaternary structure, monomer. In terms of processing, carbohydrates at Ser-73, Ser-89 and Ser-143 consist of (2-OMe)Man1-4GlcNAcU1-4GlcU1-4Glc1-4(2-OMe)GlcU1-4[(2-OMe)Rham1-2]Man.

The protein resides in the secreted. The catalysed reaction is an N(4)-(oligosaccharide-(1-&gt;3)-[oligosaccharide-(1-&gt;6)]-beta-D-Man-(1-&gt;4)-beta-D-GlcNAc-(1-&gt;4)-alpha-D-GlcNAc)-L-asparaginyl-[protein] + H2O = an oligosaccharide-(1-&gt;3)-[oligosaccharide-(1-&gt;6)]-beta-D-Man-(1-&gt;4)-D-GlcNAc + N(4)-(N-acetyl-beta-D-glucosaminyl)-L-asparaginyl-[protein]. Endohydrolysis of the di-N-acetylchitobiosyl unit in high-mannose glycopeptides and glycoproteins. Complex biantennary glycans are the preferred substrates. Tri- and tetraantennary glycans are not hydrolyzed, and high mannose glycans are very poor substrates. The chain is Endo-beta-N-acetylglucosaminidase F2 (endOF2) from Elizabethkingia meningoseptica (Chryseobacterium meningosepticum).